The sequence spans 283 residues: ATP phosphoribosyltransferase (283 aa).

The protein belongs to the ATP phosphoribosyltransferase family. Long subfamily. Mg(2+) is required as a cofactor.

It is found in the cytoplasm. The catalysed reaction is 1-(5-phospho-beta-D-ribosyl)-ATP + diphosphate = 5-phospho-alpha-D-ribose 1-diphosphate + ATP. It participates in amino-acid biosynthesis; L-histidine biosynthesis; L-histidine from 5-phospho-alpha-D-ribose 1-diphosphate: step 1/9. With respect to regulation, feedback inhibited by histidine. Functionally, catalyzes the condensation of ATP and 5-phosphoribose 1-diphosphate to form N'-(5'-phosphoribosyl)-ATP (PR-ATP). Has a crucial role in the pathway because the rate of histidine biosynthesis seems to be controlled primarily by regulation of HisG enzymatic activity. The protein is ATP phosphoribosyltransferase of Bacteroides thetaiotaomicron (strain ATCC 29148 / DSM 2079 / JCM 5827 / CCUG 10774 / NCTC 10582 / VPI-5482 / E50).